Here is a 793-residue protein sequence, read N- to C-terminus: 3',5'-cyclic-nucleotide phosphodiesterase regA (793 aa).

Positions 1-153 are disordered; the sequence is MNNKQEEIDQ…SSHRVSDFSD (153 aa). Composition is skewed to low complexity over residues 13–34, 54–69, and 80–121; these read SSTS…DSTS, NKNN…SNNN, and NNSS…NNNN. Residues 161–280 form the Response regulatory domain; that stretch reads RILVADDDDV…LLKKKIDTVL (120 aa). D212 is subject to 4-aspartylphosphate. The PDEase domain occupies 410–733; sequence RRNSIPTFPQ…ENWQAYMELQ (324 aa). Residue H487 is the Proton donor of the active site. Positions 491, 527, 528, and 639 each coordinate a divalent metal cation. Positions 756–793 are disordered; the sequence is KLPKIDEEENRDKVSSSSSSSTAPLTSTSSSNNETSSS. Low complexity predominate over residues 770 to 793; it reads SSSSSSSTAPLTSTSSSNNETSSS.

The protein belongs to the cyclic nucleotide phosphodiesterase family. A divalent metal cation serves as cofactor. Post-translationally, the phosphorelay mechanism involves the sequential transfer of a phosphate group from Asp-212 of pde2 to 'His-65' of rdeA. Phosphorylation of Asp-212 activates the phosphodiesterase domain.

The protein resides in the cytoplasm. Its subcellular location is the cytosol. The enzyme catalyses 3',5'-cyclic AMP + H2O = AMP + H(+). Inhibited by 3-isobutyl-1-methylxanthine (IBMX). In terms of biological role, phosphodiesterase specific for cAMP. Involved in the degradation of intracellular cAMP. Morphological suppressor of tagB. Phosphorelay protein that accepts phosphate from rdeA or supplies phosphate from regA; depending on the relative concentration of the phosphodonor proteins. This is 3',5'-cyclic-nucleotide phosphodiesterase regA (regA) from Dictyostelium discoideum (Social amoeba).